The primary structure comprises 399 residues: S-adenosylmethionine synthase (399 aa).

Position 17 (His17) interacts with ATP. Asp19 serves as a coordination point for Mg(2+). A K(+)-binding site is contributed by Glu45. Residues Glu58 and Gln101 each contribute to the L-methionine site. A flexible loop region spans residues 101-111 (QSPDIAQGVDE). ATP contacts are provided by residues 177-179 (DAK), 244-245 (RF), Asp253, 259-260 (RK), Ala276, and Lys280. Asp253 is an L-methionine binding site. Lys284 contributes to the L-methionine binding site.

Belongs to the AdoMet synthase family. In terms of assembly, homotetramer; dimer of dimers. Mg(2+) serves as cofactor. Requires K(+) as cofactor.

It localises to the cytoplasm. The catalysed reaction is L-methionine + ATP + H2O = S-adenosyl-L-methionine + phosphate + diphosphate. The protein operates within amino-acid biosynthesis; S-adenosyl-L-methionine biosynthesis; S-adenosyl-L-methionine from L-methionine: step 1/1. In terms of biological role, catalyzes the formation of S-adenosylmethionine (AdoMet) from methionine and ATP. The overall synthetic reaction is composed of two sequential steps, AdoMet formation and the subsequent tripolyphosphate hydrolysis which occurs prior to release of AdoMet from the enzyme. This is S-adenosylmethionine synthase from Listeria monocytogenes serotype 4b (strain CLIP80459).